Reading from the N-terminus, the 21-residue chain is Protein YnfR (21 aa).

The sequence is that of Protein YnfR from Escherichia coli (strain K12).